The chain runs to 378 residues: Ribosomal RNA large subunit methyltransferase G (378 aa).

The protein belongs to the methyltransferase superfamily. RlmG family.

The protein localises to the cytoplasm. It carries out the reaction guanosine(1835) in 23S rRNA + S-adenosyl-L-methionine = N(2)-methylguanosine(1835) in 23S rRNA + S-adenosyl-L-homocysteine + H(+). In terms of biological role, specifically methylates the guanine in position 1835 (m2G1835) of 23S rRNA. This Salmonella paratyphi B (strain ATCC BAA-1250 / SPB7) protein is Ribosomal RNA large subunit methyltransferase G.